We begin with the raw amino-acid sequence, 513 residues long: Probable DNA ligase (513 aa).

Glutamate 213 lines the ATP pocket. Catalysis depends on lysine 215, which acts as the N6-AMP-lysine intermediate. Residues arginine 220, arginine 235, glutamate 264, phenylalanine 304, arginine 376, and lysine 382 each contribute to the ATP site.

It belongs to the ATP-dependent DNA ligase family. Mg(2+) is required as a cofactor.

It catalyses the reaction ATP + (deoxyribonucleotide)n-3'-hydroxyl + 5'-phospho-(deoxyribonucleotide)m = (deoxyribonucleotide)n+m + AMP + diphosphate.. Functionally, DNA ligase that seals nicks in double-stranded DNA during DNA replication, DNA recombination and DNA repair. The protein is Probable DNA ligase of Anaeromyxobacter dehalogenans (strain 2CP-1 / ATCC BAA-258).